The primary structure comprises 700 residues: Probable transcription factor FUP6 (700 aa).

Disordered regions lie at residues Ser-343–Ser-364 and Phe-577–Gln-624. Polar residues predominate over residues Phe-577–Ser-595. Residues Asp-596–Ser-607 show a composition bias toward basic and acidic residues. The segment covering Asn-608–Asn-623 has biased composition (polar residues).

It is found in the nucleus. In terms of biological role, probable transcrition factor; part of the gene cluster that mediates the biosynthesis of the mycotoxin fusaproliferin (FUP) that belongs to the class of bicyclic sesterterpenoids. This chain is Probable transcription factor FUP6, found in Fusarium proliferatum (strain ET1) (Orchid endophyte fungus).